We begin with the raw amino-acid sequence, 654 residues long: DNA ligase (654 aa).

Residues 31–35 (DSEYD), 80–81 (SL), and Glu-109 each bind NAD(+). The active-site N6-AMP-lysine intermediate is Lys-111. 4 residues coordinate NAD(+): Arg-132, Glu-166, Lys-280, and Lys-304. Zn(2+) is bound by residues Cys-398, Cys-401, Cys-416, and Cys-421. Positions 579–654 (NIEGILSGKT…IWSEQDLLDL (76 aa)) constitute a BRCT domain.

This sequence belongs to the NAD-dependent DNA ligase family. LigA subfamily. Mg(2+) is required as a cofactor. Mn(2+) serves as cofactor.

The enzyme catalyses NAD(+) + (deoxyribonucleotide)n-3'-hydroxyl + 5'-phospho-(deoxyribonucleotide)m = (deoxyribonucleotide)n+m + AMP + beta-nicotinamide D-nucleotide.. Its function is as follows. DNA ligase that catalyzes the formation of phosphodiester linkages between 5'-phosphoryl and 3'-hydroxyl groups in double-stranded DNA using NAD as a coenzyme and as the energy source for the reaction. It is essential for DNA replication and repair of damaged DNA. The chain is DNA ligase from Lactococcus lactis subsp. lactis (strain IL1403) (Streptococcus lactis).